Consider the following 232-residue polypeptide: MAKLTKRQKAIREKVQAGKAYSVEEAVALLTELSAPVKFKESIDVSVNLGVDARKSDQVVRSSTVLPNGTGKTVRVAVFTQGANADKAKAAGADIVGMDDLAEEVKKGNLDFDVVIATPDAMRVVGQLGQILGPRGLMPNPKVGTVTADVEAAVNNAKAGQIRYRTDKNGIIHAPLGNVEFSAEHIKQNLEALIADLKKIKPSSAKGVYLKKVTLSSTMGPGLLIDQNSLAV.

Belongs to the universal ribosomal protein uL1 family. Part of the 50S ribosomal subunit.

In terms of biological role, binds directly to 23S rRNA. The L1 stalk is quite mobile in the ribosome, and is involved in E site tRNA release. Functionally, protein L1 is also a translational repressor protein, it controls the translation of the L11 operon by binding to its mRNA. This Hahella chejuensis (strain KCTC 2396) protein is Large ribosomal subunit protein uL1.